The sequence spans 284 residues: Aldo-keto reductase MAV_3816 (284 aa).

Y59 acts as the Proton donor in catalysis. Residues L199, I237, R239, S240, A241, S248, and R275 each contribute to the NADPH site.

Belongs to the aldo/keto reductase family.

This is Aldo-keto reductase MAV_3816 from Mycobacterium avium (strain 104).